The primary structure comprises 431 residues: F-box protein pof14 (431 aa).

Positions 172-186 (CPDEILQLIFSYCYD) constitute an F-box; atypical domain.

In terms of assembly, component of the E3 ubiquitin ligase Skp1-Cullin-1-F-box (SCF) complex. Interacts with skp1, cul1 and erg9.

It localises to the cytoplasm. It is found in the nucleus. The protein resides in the endoplasmic reticulum. Expression is induced during oxidative stress. Plays an essential, SCF-independent, role in the stress response to hydrogen peroxide for survival, by negatively regulating ergosterol synthesis via direct binding to the squalene synthase erg9. This Schizosaccharomyces pombe (strain 972 / ATCC 24843) (Fission yeast) protein is F-box protein pof14 (pof14).